Reading from the N-terminus, the 250-residue chain is UPF0524 protein C3orf70 homolog (250 aa).

Positions 201–250 are disordered; the sequence is ESCDEDTEEGAELSSEEDYSPESSWEPDECTLLSPSQSDLEVIETIETTV. A compositionally biased stretch (acidic residues) spans 202–229; the sequence is SCDEDTEEGAELSSEEDYSPESSWEPDE.

Belongs to the UPF0524 family.

May play a role in neuronal and neurobehavioral development. The protein is UPF0524 protein C3orf70 homolog of Bos taurus (Bovine).